The primary structure comprises 385 residues: DnaJ homolog subfamily C member 28 (385 aa).

In terms of domain architecture, J spans 48–132 (EYYRLLNLDE…EGKFKYNTPQ (85 aa)). A coiled-coil region spans residues 261-318 (KEIKDTIEQLREALLMSRKKLGNPLSPTEQKQWAQVCEQFQEKIRKLNKRINDFNLIV).

May have a role in protein folding or as a chaperone. In Mus musculus (Mouse), this protein is DnaJ homolog subfamily C member 28 (Dnajc28).